Consider the following 965-residue polypeptide: Collagen alpha-1(I) chain (965 aa).

Pro residues predominate over residues 1 to 21 (SVPGPMGPSGPRGLPGPPGPG). The tract at residues 1–965 (SVPGPMGPSG…PGPPGPPGPP (965 aa)) is disordered. 4-hydroxyproline is present on residues P15, P18, P20, P29, P32, P35, P49, P64, P70, P79, and P85. The span at 52-66 (NGDDGEAGKPGRPGE) shows a compositional bias: basic and acidic residues. The residue at position 88 (K88) is a 5-hydroxylysine; alternate. An O-linked (Gal...) hydroxylysine; alternate glycan is attached at K88. S94 is subject to Phosphoserine. The span at 102-118 (DAGPAGPKGEPGSPGEN) shows a compositional bias: low complexity. 16 positions are modified to 4-hydroxyproline: P112, P115, P121, P130, P136, P157, P166, P169, P196, P199, P211, P217, P226, P232, P235, and P250. Low complexity predominate over residues 136–154 (PGASGPAGARGNDGATGAA). Residues 156–168 (PPGPTGPAGPPGF) show a composition bias toward pro residues. A compositionally biased stretch (low complexity) spans 202 to 241 (AGAAGPAGNPGADGQPGAKGANGAPGIAGAPGFPGARGPS). K253 carries the post-translational modification 5-hydroxylysine. Residues P259, P262, P273, P282, P297, P303, P312, and P318 each carry the 4-hydroxyproline modification. The span at 307-327 (GERGGPGSRGFPGADGAGPKG) shows a compositional bias: gly residues. At K326 the chain carries 5-hydroxylysine. 4-hydroxyproline occurs at positions 335, 344, 350, 356, 365, 368, 377, 386, 392, 404, 413, 422, 425, 443, 460, 466, 472, 480, 492, 501, 509, 515, and 524. Residues 359–385 (KGLTGSPGSPGPDGKTGPPGPAGQDGR) are compositionally biased toward low complexity. The span at 394 to 413 (ARGQAGVMGFPGPKGAAGEP) shows a compositional bias: low complexity. The span at 472–482 (PGEADLGAPGP) shows a compositional bias: low complexity. A 5-hydroxylysine modification is found at K536. 4-hydroxyproline is present on residues P542, P557, and P563. Residues 569–583 (SGPSGPAGPTGARGA) are compositionally biased toward low complexity. A Phosphoserine modification is found at S572. 4-hydroxyproline occurs at positions 584, 590, 593, 602, 608, 626, 635, and 644. A compositionally biased stretch (low complexity) spans 596–623 (AGFAGPPGADGQPGAKGEPGDAGAKGDA). The segment covering 625-637 (PPGPAGPTGPPGP) has biased composition (pro residues). Residue K647 is modified to 5-hydroxylysine. Residues 652–668 (SAGPPGATGFPGAAGRV) show a composition bias toward low complexity. 2 positions are modified to 4-hydroxyproline: P656 and P662. 3-hydroxyproline is present on P670. P671, P680, P683, P704, P713, P721, P730, P748, P757, P760, P766, P771, P777, P783, P791, and P797 each carry 4-hydroxyproline. Over residues 697–706 (ETGPAGRPGE) the composition is skewed to low complexity. A compositionally biased stretch (low complexity) spans 718–730 (KGSPGADGPAGAP). Residues 768–780 (KGPPGPMGPPGLA) show a composition bias toward pro residues. K806 is modified (5-hydroxylysine). Positions 815 to 830 (SGPPGAPGAPGAPGPV) are enriched in pro residues. Residues P818, P821, and P824 each carry the 4-hydroxyproline modification. A compositionally biased stretch (low complexity) spans 851–865 (AGPAGARGPAGPQGP). Positions 866-880 (RGDKGETGEQGDRGI) are enriched in basic and acidic residues. Position 869 is a 5-hydroxylysine (K869). A 5-hydroxylysine; alternate modification is found at K881. O-linked (Gal...) hydroxylysine; alternate glycosylation is present at K881. Residues P896, P899, P917, and P932 each carry the 4-hydroxyproline modification. The segment covering 899-932 (PGEQGPSGASGPAGPRGPPGSAGSPGKDGLNGLP) has biased composition (low complexity). P937 bears the 3-hydroxyproline mark. P938 is modified (4-hydroxyproline). Residues 950 to 965 (VGPPGPPGPPGPPGPP) are compositionally biased toward pro residues. 3-hydroxyproline is present on P952. The residue at position 953 (P953) is a 4-hydroxyproline. P955 carries the post-translational modification 3-hydroxyproline. 4-hydroxyproline is present on P956. At P958 the chain carries 3-hydroxyproline. Residues P959, P962, and P965 each carry the 4-hydroxyproline modification.

The protein belongs to the fibrillar collagen family. In terms of assembly, trimers of one alpha 2(I) and two alpha 1(I) chains. Post-translationally, contains mostly 4-hydroxyproline. Proline residues at the third position of the tripeptide repeating unit (G-X-Y) are hydroxylated in some or all of the chains. Contains 3-hydroxyproline at a few sites. This modification occurs on the first proline residue in the sequence motif Gly-Pro-Hyp, where Hyp is 4-hydroxyproline. In terms of processing, lysine residues at the third position of the tripeptide repeating unit (G-X-Y) are 5-hydroxylated in some or all of the chains. Post-translationally, O-glycosylated on hydroxylated lysine residues. The O-linked glycan consists of a Glc-Gal disaccharide. Expressed in bones.

The protein localises to the secreted. The protein resides in the extracellular space. It is found in the extracellular matrix. Type I collagen is a member of group I collagen (fibrillar forming collagen). The chain is Collagen alpha-1(I) chain from Scelidotherium sp. (strain SLP-2019) (South American ground sloth).